The primary structure comprises 218 residues: MFEGPLQDLIDEFSRLPGVGPKSAQRIAFHLLHVEPADITRLQDALGAIRDGVTFCRICCNISREEVCRICADSSRDRSTICVVEEPKDIQVIERTGEYTGRYHVLGGSLDPLANIGPRELNISQLLQRIGGVLPDRELADSTPETPLYDASPEVREVILATDPNTEGEATASYLARLLRDFPDLVVSRLASGMPLGGDLEFVDELTLSRALSGRLTL.

A C4-type zinc finger spans residues 56 to 71; sequence CRICCNISREEVCRIC. The 117-residue stretch at 79-195 folds into the Toprim domain; that stretch reads STICVVEEPK…VVSRLASGMP (117 aa).

It belongs to the RecR family.

May play a role in DNA repair. It seems to be involved in an RecBC-independent recombinational process of DNA repair. It may act with RecF and RecO. The protein is Recombination protein RecR of Corynebacterium diphtheriae (strain ATCC 700971 / NCTC 13129 / Biotype gravis).